The primary structure comprises 1464 residues: Secretory phospholipase A2 receptor (1464 aa).

The N-terminal stretch at methionine 1 to alanine 22 is a signal peptide. The Extracellular portion of the chain corresponds to glutamate 23 to serine 1398. The 124-residue stretch at lysine 40 to tyrosine 163 folds into the Ricin B-type lectin domain. 17 cysteine pairs are disulfide-bonded: cysteine 53–cysteine 66, cysteine 91–cysteine 108, cysteine 180–cysteine 206, cysteine 194–cysteine 221, cysteine 262–cysteine 356, cysteine 332–cysteine 348, cysteine 408–cysteine 503, cysteine 480–cysteine 495, cysteine 619–cysteine 636, cysteine 701–cysteine 798, cysteine 776–cysteine 790, cysteine 842–cysteine 939, cysteine 916–cysteine 931, cysteine 1069–cysteine 1089, cysteine 1211–cysteine 1225, cysteine 1282–cysteine 1378, and cysteine 1356–cysteine 1370. The N-linked (GlcNAc...) asparagine glycan is linked to asparagine 95. A Fibronectin type-II domain is found at alanine 175–aspartate 223. C-type lectin domains lie at asparagine 240–lysine 357, tyrosine 387–lysine 504, histidine 524–cysteine 645, glycine 675–lysine 799, tyrosine 821–lysine 940, phenylalanine 967–cysteine 1098, tyrosine 1123–cysteine 1234, and phenylalanine 1259–lysine 1379. Asparagine 456 is a glycosylation site (N-linked (GlcNAc...) asparagine). The helical transmembrane segment at isoleucine 1399–phenylalanine 1419 threads the bilayer. Residues cysteine 1420–glutamine 1464 are Cytoplasmic-facing. Residues asparagine 1437 to threonine 1443 carry the Endocytosis signal motif.

As to quaternary structure, interacts with sPLA2-IB/PLA2G1B; this interaction mediates intracellular signaling as well as clearance of extracellular sPLA2-IB/PLA2G1B via endocytotic pathway. Interacts with sPLA2-X/PLA2G10; this interaction mediates sPLA2-X/PLA2G10 clearance and inactivation. Post-translationally, the secretory phospholipase A2 receptor form may be produced by the action of metalloproteinases. It contains all extracellular domains and only lacks transmembrane and cytosolic regions. It is however unclear whether this form is produced by proteolytic cleavage as suggested by some experiments, or by alternative splicing.

The protein resides in the cell membrane. It localises to the secreted. Functionally, receptor for secretory phospholipase A2 (sPLA2). Also able to bind to snake PA2-like toxins. Although its precise function remains unclear, binding of sPLA2 to its receptor participates in both positive and negative regulation of sPLA2 functions as well as clearance of sPLA2. Binding of sPLA2-IB/PLA2G1B induces various effects depending on the cell type, such as activation of the mitogen-activated protein kinase (MAPK) cascade to induce cell proliferation, the production of lipid mediators, selective release of arachidonic acid in bone marrow-derived mast cells. In neutrophils, binding of sPLA2-IB/PLA2G1B can activate p38 MAPK to stimulate elastase release and cell adhesion. May be involved in responses in pro-inflammatory cytokine productions during endotoxic shock. Also has endocytic properties and rapidly internalizes sPLA2 ligands, which is particularly important for the clearance of extracellular sPLA2s to protect their potent enzymatic activities. The soluble secretory phospholipase A2 receptor form is circulating and acts as a negative regulator of sPLA2 functions by blocking the biological functions of sPLA2-IB/PLA2G1B and sPLA2-X/PLA2G10. The sequence is that of Secretory phospholipase A2 receptor (PLA2R1) from Pongo abelii (Sumatran orangutan).